A 26-amino-acid polypeptide reads, in one-letter code: AMP deaminase 1 (26 aa).

This sequence belongs to the metallo-dependent hydrolases superfamily. Adenosine and AMP deaminases family. As to quaternary structure, homotetramer. Zn(2+) is required as a cofactor.

It carries out the reaction AMP + H2O + H(+) = IMP + NH4(+). The protein operates within purine metabolism; IMP biosynthesis via salvage pathway; IMP from AMP: step 1/1. In terms of biological role, AMP deaminase plays a critical role in energy metabolism. The chain is AMP deaminase 1 (AMPD1) from Oryctolagus cuniculus (Rabbit).